The primary structure comprises 520 residues: Peptide chain release factor 3 (520 aa).

The tr-type G domain occupies Glu8–Thr277. GTP contacts are provided by residues Ser17–Thr24, Asp85–His89, and Asn139–Asp142.

The protein belongs to the TRAFAC class translation factor GTPase superfamily. Classic translation factor GTPase family. PrfC subfamily.

The protein localises to the cytoplasm. Its function is as follows. Increases the formation of ribosomal termination complexes and stimulates activities of RF-1 and RF-2. It binds guanine nucleotides and has strong preference for UGA stop codons. It may interact directly with the ribosome. The stimulation of RF-1 and RF-2 is significantly reduced by GTP and GDP, but not by GMP. The polypeptide is Peptide chain release factor 3 (Staphylococcus aureus (strain MRSA252)).